A 533-amino-acid polypeptide reads, in one-letter code: Glycogen synthase (533 aa).

Residue K12 participates in ADP-alpha-D-glucose binding. The disordered stretch occupies residues 497–533 (AALARADAASGRRRRAPEQSERLRQERLARQVALASK). Basic and acidic residues predominate over residues 512–525 (APEQSERLRQERLA).

It belongs to the glycosyltransferase 1 family. Bacterial/plant glycogen synthase subfamily.

The catalysed reaction is [(1-&gt;4)-alpha-D-glucosyl](n) + ADP-alpha-D-glucose = [(1-&gt;4)-alpha-D-glucosyl](n+1) + ADP + H(+). The protein operates within glycan biosynthesis; glycogen biosynthesis. Synthesizes alpha-1,4-glucan chains using ADP-glucose. In Burkholderia thailandensis (strain ATCC 700388 / DSM 13276 / CCUG 48851 / CIP 106301 / E264), this protein is Glycogen synthase.